The primary structure comprises 1026 residues: uncharacterized protein (1026 aa).

4 WD repeats span residues 14–53, 62–104, 148–187, and 937–977; these read LLDEGLDVSSIHCFDQYLIVGQCSGQVMVFDVSTDNHFTL, HSVS…RRAT, GHEDWPILFPFKDEALLIPVAYSDGSVSLWSVDWSALTFK, and NAEC…VKFL.

Its subcellular location is the cytoplasm. The protein localises to the nucleus. This is an uncharacterized protein from Schizosaccharomyces pombe (strain 972 / ATCC 24843) (Fission yeast).